The following is a 342-amino-acid chain: Inositol-tetrakisphosphate 1-kinase 5 (342 aa).

Positions 25 and 67 each coordinate 1D-myo-inositol 1,3,4-trisphosphate. ATP contacts are provided by arginine 102 and lysine 154. 1D-myo-inositol 1,3,4-trisphosphate-binding residues include histidine 165 and lysine 197. ATP is bound by residues 186-197 and serine 212; that span reads QEFVNHGGVIFK. Mg(2+)-binding residues include aspartate 283, aspartate 298, and asparagine 300. Residue asparagine 300 participates in 1D-myo-inositol 1,3,4-trisphosphate binding.

Belongs to the ITPK1 family. Monomer. The cofactor is Mg(2+). In terms of tissue distribution, expressed in roots, leaves, flowers, anthers and embryos.

The enzyme catalyses 1D-myo-inositol 3,4,5,6-tetrakisphosphate + ATP = 1D-myo-inositol 1,3,4,5,6-pentakisphosphate + ADP + H(+). The catalysed reaction is 1D-myo-inositol 1,3,4-trisphosphate + ATP = 1D-myo-inositol 1,3,4,5-tetrakisphosphate + ADP + H(+). It carries out the reaction 1D-myo-inositol 1,3,4-trisphosphate + ATP = 1D-myo-inositol 1,3,4,6-tetrakisphosphate + ADP + H(+). Kinase that can phosphorylate various inositol polyphosphate such as Ins(3,4,5,6)P4 or Ins(1,3,4)P3 and participates in phytic acid biosynthesis in developing seeds. Phytic acid is the primary storage form of phosphorus in cereal grains and other plant seeds. The chain is Inositol-tetrakisphosphate 1-kinase 5 (ITPK5) from Oryza sativa subsp. japonica (Rice).